We begin with the raw amino-acid sequence, 627 residues long: 1,4-alpha-glucan branching enzyme GlgB (627 aa).

The Nucleophile role is filled by Asp-309. Glu-352 (proton donor) is an active-site residue.

The protein belongs to the glycosyl hydrolase 13 family. GlgB subfamily. As to quaternary structure, monomer.

The catalysed reaction is Transfers a segment of a (1-&gt;4)-alpha-D-glucan chain to a primary hydroxy group in a similar glucan chain.. Its pathway is glycan biosynthesis; glycogen biosynthesis. In terms of biological role, catalyzes the formation of the alpha-1,6-glucosidic linkages in glycogen by scission of a 1,4-alpha-linked oligosaccharide from growing alpha-1,4-glucan chains and the subsequent attachment of the oligosaccharide to the alpha-1,6 position. In Bacillus subtilis (strain 168), this protein is 1,4-alpha-glucan branching enzyme GlgB (glgB).